The primary structure comprises 420 residues: MQNLLEALVSRSLVHDQTPGLQARLAQGPITGYVGFDPTADSLHVGHLLAVMSLAWLQRCGGTPIIVVGGGTGMVGDPSGKRSERPVLSVEEIDRNVAAIRAQLERFVSFEGQNAARVRNNADWLRAIGLMEFLRDVGKHFTVNYMLAKDSVKGRMESGISFTEFSYQLIQAYDFWHLFRSEKCELQMGGSDQWGNITAGAELVSRKDGASVHGLTFPLLTTASGTKFGKTEGGAVWLDPARTSPYKFFQFWLNTDDRDVERLLKFFTFLSVEEIAALLAEQARDPGKRPAQRRLAEDVTARVHGPDVTRSVVEASRILFGGTDLRAASADVLEVLAGEIPSATVTGDELAALTVADLLVKVGLAASKGEVRRGVAGRGFSLNGAVLESGDAKVAAGDLLAGGYALLQKGKRNYALVKVR.

Tyr33 lines the L-tyrosine pocket. Positions 38 to 47 match the 'HIGH' region motif; sequence PTADSLHVGH. The L-tyrosine site is built by Tyr167 and Gln171. The 'KMSKS' region motif lies at 227-231; the sequence is KFGKT. Lys230 serves as a coordination point for ATP. The S4 RNA-binding domain maps to 353 to 419; the sequence is LTVADLLVKV…GKRNYALVKV (67 aa).

It belongs to the class-I aminoacyl-tRNA synthetase family. TyrS type 1 subfamily. Homodimer.

The protein localises to the cytoplasm. It carries out the reaction tRNA(Tyr) + L-tyrosine + ATP = L-tyrosyl-tRNA(Tyr) + AMP + diphosphate + H(+). Functionally, catalyzes the attachment of tyrosine to tRNA(Tyr) in a two-step reaction: tyrosine is first activated by ATP to form Tyr-AMP and then transferred to the acceptor end of tRNA(Tyr). This chain is Tyrosine--tRNA ligase, found in Anaeromyxobacter dehalogenans (strain 2CP-1 / ATCC BAA-258).